Consider the following 193-residue polypeptide: MLLSDRDIRAAHAEGHISLDPWTDEMVQPASIDVRLDRFFRLFNNHAYTYVDPAENQGELTEQFEVGPDEPWILHPGEFALGSTWEYVKIDETLAARLEGKSSLGRLGILTHSTAGFIDPGFEGHITLELSNVSTLPVKLWPGMKIGQMCFFQLSSPSEHPYGSETTGSHYQGQRGPTPSRSYQNFYRAQITD.

DCTP is bound by residues Lys101–Arg106, Asp119, Thr127–Glu129, Gln148, Tyr162, and Gln174. Glu129 (proton donor/acceptor) is an active-site residue. Residues Pro161–Gln184 form a disordered region.

The protein belongs to the dCTP deaminase family. In terms of assembly, homotrimer.

The catalysed reaction is dCTP + 2 H2O = dUMP + NH4(+) + diphosphate. It participates in pyrimidine metabolism; dUMP biosynthesis; dUMP from dCTP: step 1/1. Functionally, bifunctional enzyme that catalyzes both the deamination of dCTP to dUTP and the hydrolysis of dUTP to dUMP without releasing the toxic dUTP intermediate. The sequence is that of dCTP deaminase, dUMP-forming from Bifidobacterium animalis subsp. lactis (strain AD011).